Here is a 1211-residue protein sequence, read N- to C-terminus: DNA-directed RNA polymerase subunit beta' (1211 aa).

Zn(2+) contacts are provided by C60, C62, C75, and C78. Residues D449, D451, and D453 each coordinate Mg(2+). 4 residues coordinate Zn(2+): C818, C892, C899, and C902.

The protein belongs to the RNA polymerase beta' chain family. In terms of assembly, the RNAP catalytic core consists of 2 alpha, 1 beta, 1 beta' and 1 omega subunit. When a sigma factor is associated with the core the holoenzyme is formed, which can initiate transcription. Mg(2+) serves as cofactor. The cofactor is Zn(2+).

The catalysed reaction is RNA(n) + a ribonucleoside 5'-triphosphate = RNA(n+1) + diphosphate. Functionally, DNA-dependent RNA polymerase catalyzes the transcription of DNA into RNA using the four ribonucleoside triphosphates as substrates. This chain is DNA-directed RNA polymerase subunit beta', found in Limosilactobacillus reuteri (strain DSM 20016) (Lactobacillus reuteri).